We begin with the raw amino-acid sequence, 199 residues long: Early activation antigen CD69 (199 aa).

A compositionally biased stretch (polar residues) spans 1–14 (MDSENCSITENSSS). Positions 1–20 (MDSENCSITENSSSHLERGQ) are disordered. Over 1-40 (MDSENCSITENSSSHLERGQKDHGTSIHFEKHHEGSIQVS) the chain is Cytoplasmic. A helical; Signal-anchor for type II membrane protein transmembrane segment spans residues 41 to 61 (IPWAVLIVVLITSLIIALIAL). Residues 62 to 199 (NVGKYNCPGL…FHWVCSKPSR (138 aa)) are Extracellular-facing. Cystine bridges form between C85-C96, C113-C194, and C173-C186. The C-type lectin domain maps to 92–195 (YKRTCYFFST…CEANFHWVCS (104 aa)). N-linked (GlcNAc...) asparagine glycosylation is found at N150, N166, and N180.

Homodimer; disulfide-linked. Interacts with S100A8 and S100A9. Interacts with galactin-1/LGALS1. Interacts with S1PR1; this interaction mediates S1PR1 degradation. Interacts with JAK3 and STAT5. Constitutive Ser/Thr phosphorylation in both mature thymocytes and activated T-lymphocytes. Expressed on the surface of activated T-cells, B-cells, natural killer cells, neutrophils and platelets. Present also in eosinophils.

It is found in the cell membrane. Functionally, transmembrane protein expressed mainly on T-cells resident in mucosa that plays an essential role in immune cell homeostasis. Rapidly expressed on the surface of platelets, T-lymphocytes and NK cells upon activation by various stimuli, such as antigen recognition or cytokine signaling, stimulates different signaling pathways in different cell types. Negatively regulates Th17 cell differentiation through its carbohydrate dependent interaction with galectin-1/LGALS1 present on immature dendritic cells. Association of CD69 cytoplasmic tail with the JAK3/STAT5 signaling pathway regulates the transcription of RORgamma/RORC and, consequently, differentiation toward the Th17 lineage. Also acts via the S100A8/S100A9 complex present on peripheral blood mononuclear cells to promote the conversion of naive CD4 T-cells into regulatory T-cells. Acts as an oxidized low-density lipoprotein (oxLDL) receptor in CD4 T-lymphocytes and negatively regulates the inflammatory response by inducing the expression of PDCD1 through the activation of NFAT. Participates in adipose tissue-derived mesenchymal stem cells (ASCs)-mediated protection against P.aeruginosa infection. Mechanistically, specifically recognizes P.aeruginosa to promote ERK1 activation, followed by granulocyte-macrophage colony-stimulating factor (GM-CSF) and other inflammatory cytokines secretion. In eosinophils, induces IL-10 production through the ERK1/2 pathway. Negatively regulates the chemotactic responses of effector lymphocytes and dendritic cells (DCs) to sphingosine 1 phosphate/S1P by acting as a S1PR1 receptor agonist and facilitating the internalization and degradation of the receptor. The sequence is that of Early activation antigen CD69 (Cd69) from Mus musculus (Mouse).